The primary structure comprises 132 residues: Protein NrdI (132 aa).

Belongs to the NrdI family.

Functionally, probably involved in ribonucleotide reductase function. The chain is Protein NrdI from Staphylococcus aureus (strain Mu3 / ATCC 700698).